The following is a 205-amino-acid chain: Urease accessory protein UreE (205 aa).

Basic residues predominate over residues alanine 178 to glycine 196. The tract at residues alanine 178–serine 205 is disordered.

It belongs to the UreE family.

Its subcellular location is the cytoplasm. Functionally, involved in urease metallocenter assembly. Binds nickel. Probably functions as a nickel donor during metallocenter assembly. This is Urease accessory protein UreE from Bordetella pertussis (strain Tohama I / ATCC BAA-589 / NCTC 13251).